Consider the following 237-residue polypeptide: Ribosomal RNA small subunit methyltransferase G (237 aa).

Residues Gly-78, Phe-83, Ala-129–Glu-130, and Arg-148 contribute to the S-adenosyl-L-methionine site.

The protein belongs to the methyltransferase superfamily. RNA methyltransferase RsmG family.

The protein localises to the cytoplasm. Specifically methylates the N7 position of a guanine in 16S rRNA. In Streptococcus pyogenes serotype M2 (strain MGAS10270), this protein is Ribosomal RNA small subunit methyltransferase G.